Consider the following 370-residue polypeptide: MQFELLSTSAGARRGRLTLAHGAVETPVFMPVGTYGTVKAMTPAMLSDVGAQICLGNTFHLWLRPGLDIVGAHGGLHRFMGWDKPILTDSGGFQVFSLGALRKISEEGVKFASPIDGARLFLTPEISMQIQTVLNSDVVMIFDECTPYPATRDEAAKSMRLSRRWARRSRDEFDRLENANALFGIVQGGMYEDLRDESLGALQDIGFHGFAIGGLSVGEPKDDMARILAHTAPRLPADKPRYLMGVGTPEDIVDGIANGIDMFDCVMPTRNARNGWLFTRYGDLKIKNAVHKADTRPLDPSCSCYTCRNFSRSYLHHLHRAGEILGSMLNTVHNLHYYQTLTAELRDAIAADRFADYVTRFRSERATGAH.

Asp-89 serves as the catalytic Proton acceptor. Substrate contacts are provided by residues 89 to 93 (DSGGF), Asp-143, Gln-187, and Gly-214. An RNA binding region spans residues 245–251 (GVGTPED). Asp-264 serves as the catalytic Nucleophile. The tract at residues 269-273 (TRNAR) is RNA binding; important for wobble base 34 recognition. 4 residues coordinate Zn(2+): Cys-302, Cys-304, Cys-307, and His-333.

It belongs to the queuine tRNA-ribosyltransferase family. Homodimer. Within each dimer, one monomer is responsible for RNA recognition and catalysis, while the other monomer binds to the replacement base PreQ1. The cofactor is Zn(2+).

The catalysed reaction is 7-aminomethyl-7-carbaguanine + guanosine(34) in tRNA = 7-aminomethyl-7-carbaguanosine(34) in tRNA + guanine. Its pathway is tRNA modification; tRNA-queuosine biosynthesis. Its function is as follows. Catalyzes the base-exchange of a guanine (G) residue with the queuine precursor 7-aminomethyl-7-deazaguanine (PreQ1) at position 34 (anticodon wobble position) in tRNAs with GU(N) anticodons (tRNA-Asp, -Asn, -His and -Tyr). Catalysis occurs through a double-displacement mechanism. The nucleophile active site attacks the C1' of nucleotide 34 to detach the guanine base from the RNA, forming a covalent enzyme-RNA intermediate. The proton acceptor active site deprotonates the incoming PreQ1, allowing a nucleophilic attack on the C1' of the ribose to form the product. After dissociation, two additional enzymatic reactions on the tRNA convert PreQ1 to queuine (Q), resulting in the hypermodified nucleoside queuosine (7-(((4,5-cis-dihydroxy-2-cyclopenten-1-yl)amino)methyl)-7-deazaguanosine). This Azoarcus sp. (strain BH72) protein is Queuine tRNA-ribosyltransferase.